The primary structure comprises 145 residues: D-aminoacyl-tRNA deacylase (145 aa).

The Gly-cisPro motif, important for rejection of L-amino acids signature appears at 137 to 138; the sequence is GP.

This sequence belongs to the DTD family. Homodimer.

The protein localises to the cytoplasm. The enzyme catalyses glycyl-tRNA(Ala) + H2O = tRNA(Ala) + glycine + H(+). It catalyses the reaction a D-aminoacyl-tRNA + H2O = a tRNA + a D-alpha-amino acid + H(+). In terms of biological role, an aminoacyl-tRNA editing enzyme that deacylates mischarged D-aminoacyl-tRNAs. Also deacylates mischarged glycyl-tRNA(Ala), protecting cells against glycine mischarging by AlaRS. Acts via tRNA-based rather than protein-based catalysis; rejects L-amino acids rather than detecting D-amino acids in the active site. By recycling D-aminoacyl-tRNA to D-amino acids and free tRNA molecules, this enzyme counteracts the toxicity associated with the formation of D-aminoacyl-tRNA entities in vivo and helps enforce protein L-homochirality. This chain is D-aminoacyl-tRNA deacylase, found in Salmonella choleraesuis (strain SC-B67).